A 341-amino-acid chain; its full sequence is Glyceraldehyde-3-phosphate dehydrogenase 1 (341 aa).

NAD(+) is bound by residues 13-14 (RI), D35, and K85. D-glyceraldehyde 3-phosphate is bound by residues 157-159 (SCT), T188, 217-218 (TG), and R240. C158 (nucleophile) is an active-site residue. Residue N322 participates in NAD(+) binding.

It belongs to the glyceraldehyde-3-phosphate dehydrogenase family. Homotetramer.

It is found in the cytoplasm. The enzyme catalyses D-glyceraldehyde 3-phosphate + phosphate + NAD(+) = (2R)-3-phospho-glyceroyl phosphate + NADH + H(+). Its pathway is carbohydrate degradation; glycolysis; pyruvate from D-glyceraldehyde 3-phosphate: step 1/5. The protein is Glyceraldehyde-3-phosphate dehydrogenase 1 (gpd-1) of Caenorhabditis elegans.